Here is a 152-residue protein sequence, read N- to C-terminus: Lipoprotein signal peptidase (152 aa).

2 consecutive transmembrane segments (helical) span residues 55–75 (NKMW…VFYM) and 85–105 (LGIS…DRVF). Active-site residues include Asp-111 and Asp-129. The chain crosses the membrane as a helical span at residues 124 to 144 (VFNIADSALCIGVVLIIIQTL).

The protein belongs to the peptidase A8 family.

Its subcellular location is the cell membrane. The catalysed reaction is Release of signal peptides from bacterial membrane prolipoproteins. Hydrolyzes -Xaa-Yaa-Zaa-|-(S,diacylglyceryl)Cys-, in which Xaa is hydrophobic (preferably Leu), and Yaa (Ala or Ser) and Zaa (Gly or Ala) have small, neutral side chains.. It participates in protein modification; lipoprotein biosynthesis (signal peptide cleavage). Functionally, this protein specifically catalyzes the removal of signal peptides from prolipoproteins. The chain is Lipoprotein signal peptidase from Bacillus cereus (strain G9842).